A 558-amino-acid polypeptide reads, in one-letter code: MLLKSLALIASSSLAATFNIGDDLFADPQFTVQFHNRPLRQADVQNGLLPHRDPVYGHPLGYEMMQFNGTNHICGIPEVTTTKSSKSREEGELSPTEARDRALELMLPLLGDCLFYEQGFFSYRFCYGSGVVQYRRHGDNYFPRIYPPPQADDSPTFVLGSFEKDDTTNTVTSAGGIPFLAHRLRSGTHCPLTGANREIEVQFVCDKNVQHDHILWIKEKRTCNYVMQVGTPRLCKDMRFQPPPDESLPIMCYSVESEAPEFETIDGMFDGVAHVKEEQEAVSARAHQFVGSNVNKDKIDEIEVAWRFTKARALNYIGVWLGDCVNRQTLFKELGIATPSHDAPFIIQTRSMFVPAPINRHFEVRLMITRQQLLLSINDDDVTLEEKYAWWQEQGDMSNLEIQGLTMLDDAGIEDVLARATDEVMKQLNKEAKQSKKLAKKKEAASTKREEAKKQVEASVEEKAVDSAEDDGTDTVTSTQTFFRTQTLSTAEAESKQMPDKAEEDEDEDLIVTMYFEDGEFKIEGFEVADFEGVKSAMKDLADKEDDDDDYEDYGLSD.

Positions 1-17 (MLLKSLALIASSSLAAT) are cleaved as a signal peptide. An N-linked (GlcNAc...) asparagine glycan is attached at Asn68. Residues 111 to 237 (GDCLFYEQGF…QVGTPRLCKD (127 aa)) enclose the MRH domain. The cysteines at positions 113 and 126 are disulfide-linked. A mannooligosaccharide derivative-binding residues include Gln133, Arg197, Glu219, and Tyr225. 2 cysteine pairs are disulfide-bonded: Cys190–Cys223 and Cys205–Cys235. Disordered regions lie at residues 435–508 (SKKL…DEDE) and 539–558 (KDLA…GLSD). Residues 441-466 (KKEAASTKREEAKKQVEASVEEKAVD) are compositionally biased toward basic and acidic residues. The span at 474–492 (DTVTSTQTFFRTQTLSTAE) shows a compositional bias: polar residues. Residues 543 to 558 (DKEDDDDDYEDYGLSD) are compositionally biased toward acidic residues.

Belongs to the OS-9 family. As to quaternary structure, interacts with missfolded ER lumenal proteins.

The protein localises to the endoplasmic reticulum membrane. In terms of biological role, lectin involved in the quality control of the secretory pathway. As a member of the endoplasmic reticulum-associated degradation lumenal (ERAD-L) surveillance system, targets misfolded endoplasmic reticulum lumenal glycoproteins for degradation. In Yarrowia lipolytica (strain CLIB 122 / E 150) (Yeast), this protein is Protein OS-9 homolog (YOS9).